Here is a 367-residue protein sequence, read N- to C-terminus: Flagellar P-ring protein (367 aa).

Residues 1 to 22 (MRRMLVIRWILAIHLIATQVFA) form the signal peptide.

This sequence belongs to the FlgI family. In terms of assembly, the basal body constitutes a major portion of the flagellar organelle and consists of four rings (L,P,S, and M) mounted on a central rod.

It localises to the periplasm. The protein localises to the bacterial flagellum basal body. Functionally, assembles around the rod to form the L-ring and probably protects the motor/basal body from shearing forces during rotation. The polypeptide is Flagellar P-ring protein (Legionella pneumophila subsp. pneumophila (strain Philadelphia 1 / ATCC 33152 / DSM 7513)).